We begin with the raw amino-acid sequence, 467 residues long: Chromosomal replication initiator protein DnaA (467 aa).

Residues 1–85 are domain I, interacts with DnaA modulators; the sequence is MSLSLWQQCL…FEVGAKPASS (85 aa). Residues 85-130 are domain II; sequence SLQKGAVSPAAAAIPAAQVQTARVAPTIVRPGWDNVPAPAEPTYRS. A domain III, AAA+ region region spans residues 131–347; that stretch reads NVNVKHTFDN…GALNRVIANA (217 aa). ATP contacts are provided by G175, G177, K178, and T179. A domain IV, binds dsDNA region spans residues 348–467; sequence NFTGRAITID…FSNLIRTLSS (120 aa).

The protein belongs to the DnaA family. As to quaternary structure, oligomerizes as a right-handed, spiral filament on DNA at oriC.

The protein localises to the cytoplasm. Functionally, plays an essential role in the initiation and regulation of chromosomal replication. ATP-DnaA binds to the origin of replication (oriC) to initiate formation of the DNA replication initiation complex once per cell cycle. Binds the DnaA box (a 9 base pair repeat at the origin) and separates the double-stranded (ds)DNA. Forms a right-handed helical filament on oriC DNA; dsDNA binds to the exterior of the filament while single-stranded (ss)DNA is stabiized in the filament's interior. The ATP-DnaA-oriC complex binds and stabilizes one strand of the AT-rich DNA unwinding element (DUE), permitting loading of DNA polymerase. After initiation quickly degrades to an ADP-DnaA complex that is not apt for DNA replication. Binds acidic phospholipids. This chain is Chromosomal replication initiator protein DnaA, found in Klebsiella pneumoniae (strain 342).